The primary structure comprises 402 residues: GDSL esterase/lipase At1g20120 (402 aa).

The first 35 residues, 1–35 (MLQDRVSGSLSSSKISRCVLFLSLFCFFLLTMHAS), serve as a signal peptide directing secretion. The tract at residues 41–69 (RVPNPGPSPAPEPKPCPSPGPNPAPATTK) is disordered. Residues 44-64 (NPGPSPAPEPKPCPSPGPNPA) show a composition bias toward pro residues. Asn-73 carries N-linked (GlcNAc...) asparagine glycosylation. Ser-85 functions as the Nucleophile in the catalytic mechanism. 2 N-linked (GlcNAc...) asparagine glycosylation sites follow: Asn-314 and Asn-367. Active-site residues include Asp-375 and His-378.

Belongs to the 'GDSL' lipolytic enzyme family.

It is found in the secreted. In Arabidopsis thaliana (Mouse-ear cress), this protein is GDSL esterase/lipase At1g20120.